A 187-amino-acid polypeptide reads, in one-letter code: Peptidyl-tRNA hydrolase (187 aa).

TRNA is bound at residue tyrosine 14. Catalysis depends on histidine 19, which acts as the Proton acceptor. The tRNA site is built by phenylalanine 60 and asparagine 62.

Belongs to the PTH family. In terms of assembly, monomer.

It is found in the cytoplasm. It carries out the reaction an N-acyl-L-alpha-aminoacyl-tRNA + H2O = an N-acyl-L-amino acid + a tRNA + H(+). Hydrolyzes ribosome-free peptidyl-tRNAs (with 1 or more amino acids incorporated), which drop off the ribosome during protein synthesis, or as a result of ribosome stalling. In terms of biological role, catalyzes the release of premature peptidyl moieties from peptidyl-tRNA molecules trapped in stalled 50S ribosomal subunits, and thus maintains levels of free tRNAs and 50S ribosomes. In Pseudothermotoga lettingae (strain ATCC BAA-301 / DSM 14385 / NBRC 107922 / TMO) (Thermotoga lettingae), this protein is Peptidyl-tRNA hydrolase.